Reading from the N-terminus, the 80-residue chain is Exodeoxyribonuclease 7 small subunit (80 aa).

The protein belongs to the XseB family. Heterooligomer composed of large and small subunits.

The protein resides in the cytoplasm. It carries out the reaction Exonucleolytic cleavage in either 5'- to 3'- or 3'- to 5'-direction to yield nucleoside 5'-phosphates.. Its function is as follows. Bidirectionally degrades single-stranded DNA into large acid-insoluble oligonucleotides, which are then degraded further into small acid-soluble oligonucleotides. The polypeptide is Exodeoxyribonuclease 7 small subunit (Rickettsia canadensis (strain McKiel)).